The following is an 819-amino-acid chain: DNA mismatch repair protein MutS (819 aa).

596–603 (GPNMSGKS) is an ATP binding site.

The protein belongs to the DNA mismatch repair MutS family.

Its function is as follows. This protein is involved in the repair of mismatches in DNA. It is possible that it carries out the mismatch recognition step. This protein has a weak ATPase activity. This Thermosipho melanesiensis (strain DSM 12029 / CIP 104789 / BI429) protein is DNA mismatch repair protein MutS.